The sequence spans 1119 residues: MEIKRFGRIREVIPLPPLTEIQVESYRRALQADVPPEKRENVGIQAAFRETFPIEEEDKGKGGLVLDFLEYRLGEPPFPQDECREKDLTYQAPLYARLQLIHKDTGLIKEDEVFLGHIPLMTEDGSFIINGADRVIVSQIHRSPGVYFTPDPARPGRYIASIIPLPKRGPWIDLEVEPNGVVSMKVNKRKFPLVLLLRVLGYDQETLARELGAYGELVQGLMDESVFAMRPEEALIRLFTLLRPGDPPKRDKAVAYVYGLIADPRRYDLGEAGRYKAEEKLGIRLSGRTLARFEDGEFKDEVFLPTLRYLFALTAGVPGHEVDDIDHLGNRRIRTVGELMTDQFRVGLARLARGVRERMLMGSEDSLTPAKLVNSRPLEAAIREFFSRSQLSQFKDETNPLSSLRHKRRISALGPGGLTRERAGFDVRDVHRTHYGRICPVETPEGANIGLITSLAAYARVDELGFIRTPYRRVVGGVVTDEVVYMTATEEDRYTIAQANTPLEGNRIAAERVVARRKGEPVIVSPEEVEFMDVSPKQVFSVNTNLIPFLEHDDANRALMGSNMQTQAVPLIRAQAPVVMTGLEERVVRDSLAALYAEEDGEVAKVDGNRIVVRYEDGRLVEYPLRRFYRSNQGTALDQRPRVVVGQRVRKGDLLADGPASENGFLALGQNVLVAIMPFDGYNFEDAIVISEELLKRDFYTSIHIERYEIEARDTKLGPERITRDIPHLSEAALRDLDEEGVVRIGAEVKPGDILVGRTSFKGESEPTPEERLLRSIFGEKARDVKDTSLRVPPGEGGIVVRTVRLRRGDPGVELKPGVREVVRVYVAQKRKLQVGDKLANRHGNKGVVAKILPVEDMPHLPDGTPVDVILNPLGVPSRMNLGQILETHLGLAGYFLGQRYISPIFDGAKEPEIKELLAQAFEVYFGKRKGEGFGVDKREVEVLRRAEKLGLVTPGKTPEEQLKELFLQGKVVLYDGRTGEPIEGPIVVGQMFIMKLYHMVEDKMHARSTGPYSLITQQPLGGKAQFGGQRFGEMEVWALEAYGAAHTLQEMLTLKSDDIEGRNAAYEAIIKGEDVPEPSVPESFRVLVKELQALALDVQTLDEKDNPVDIFEGLASKR.

The protein belongs to the RNA polymerase beta chain family. In terms of assembly, the RNAP catalytic core consists of 2 alpha, 1 beta, 1 beta' and 1 omega subunit. When a sigma factor is associated with the core the holoenzyme is formed, which can initiate transcription.

The enzyme catalyses RNA(n) + a ribonucleoside 5'-triphosphate = RNA(n+1) + diphosphate. Functionally, DNA-dependent RNA polymerase catalyzes the transcription of DNA into RNA using the four ribonucleoside triphosphates as substrates. The sequence is that of DNA-directed RNA polymerase subunit beta from Thermus thermophilus (strain ATCC 27634 / DSM 579 / HB8).